The following is a 168-amino-acid chain: Transcription elongation factor GreB (168 aa).

The stretch at 61–84 (KKMLREIDSRVRFLRKRLENLKVV) forms a coiled coil.

Belongs to the GreA/GreB family. GreB subfamily.

Necessary for efficient RNA polymerase transcription elongation past template-encoded arresting sites. The arresting sites in DNA have the property of trapping a certain fraction of elongating RNA polymerases that pass through, resulting in locked ternary complexes. Cleavage of the nascent transcript by cleavage factors such as GreA or GreB allows the resumption of elongation from the new 3'terminus. GreB releases sequences of up to 9 nucleotides in length. The sequence is that of Transcription elongation factor GreB from Pseudomonas aeruginosa (strain ATCC 15692 / DSM 22644 / CIP 104116 / JCM 14847 / LMG 12228 / 1C / PRS 101 / PAO1).